A 415-amino-acid polypeptide reads, in one-letter code: Putative F-box/FBD/LRR-repeat protein At3g49040 (415 aa).

Residues 10 to 58 (EDRISELHEALLVHIMSSLPTKTVVATSVLSKRWRHVWKTVQNLKFVSK) enclose the F-box domain. LRR repeat units follow at residues 60 to 86 (HQTF…DLEF), 87 to 114 (SNQL…VLDL), 143 to 170 (TLTL…HLYK), 171 to 196 (VHFY…IVHR), and 213 to 241 (RLTI…NIRR). One can recognise an FBD domain in the interval 272-377 (ILESLTSAKR…TSLKKATFST (106 aa)).

This chain is Putative F-box/FBD/LRR-repeat protein At3g49040, found in Arabidopsis thaliana (Mouse-ear cress).